A 388-amino-acid chain; its full sequence is Succinate--CoA ligase [ADP-forming] subunit beta (388 aa).

The 236-residue stretch at 9-244 (KALFAEYGLP…PSQDDAREAH (236 aa)) folds into the ATP-grasp domain. Residues K46, 53 to 55 (GRG), E99, T102, and E107 each bind ATP. Mg(2+) is bound by residues N199 and D213. Residues N264 and 321 to 323 (GIV) contribute to the substrate site.

Belongs to the succinate/malate CoA ligase beta subunit family. In terms of assembly, heterotetramer of two alpha and two beta subunits. The cofactor is Mg(2+).

It catalyses the reaction succinate + ATP + CoA = succinyl-CoA + ADP + phosphate. The enzyme catalyses GTP + succinate + CoA = succinyl-CoA + GDP + phosphate. It participates in carbohydrate metabolism; tricarboxylic acid cycle; succinate from succinyl-CoA (ligase route): step 1/1. In terms of biological role, succinyl-CoA synthetase functions in the citric acid cycle (TCA), coupling the hydrolysis of succinyl-CoA to the synthesis of either ATP or GTP and thus represents the only step of substrate-level phosphorylation in the TCA. The beta subunit provides nucleotide specificity of the enzyme and binds the substrate succinate, while the binding sites for coenzyme A and phosphate are found in the alpha subunit. The sequence is that of Succinate--CoA ligase [ADP-forming] subunit beta from Shewanella pealeana (strain ATCC 700345 / ANG-SQ1).